We begin with the raw amino-acid sequence, 153 residues long: ATP synthase subunit b' (153 aa).

The helical transmembrane segment at Leu23 to Phe40 threads the bilayer.

The protein belongs to the ATPase B chain family. F-type ATPases have 2 components, F(1) - the catalytic core - and F(0) - the membrane proton channel. F(1) has five subunits: alpha(3), beta(3), gamma(1), delta(1), epsilon(1). F(0) has four main subunits: a(1), b(1), b'(1) and c(10-14). The alpha and beta chains form an alternating ring which encloses part of the gamma chain. F(1) is attached to F(0) by a central stalk formed by the gamma and epsilon chains, while a peripheral stalk is formed by the delta, b and b' chains.

It is found in the cellular thylakoid membrane. In terms of biological role, f(1)F(0) ATP synthase produces ATP from ADP in the presence of a proton or sodium gradient. F-type ATPases consist of two structural domains, F(1) containing the extramembraneous catalytic core and F(0) containing the membrane proton channel, linked together by a central stalk and a peripheral stalk. During catalysis, ATP synthesis in the catalytic domain of F(1) is coupled via a rotary mechanism of the central stalk subunits to proton translocation. Component of the F(0) channel, it forms part of the peripheral stalk, linking F(1) to F(0). The b'-subunit is a diverged and duplicated form of b found in plants and photosynthetic bacteria. This Prochlorococcus marinus (strain MIT 9312) protein is ATP synthase subunit b'.